A 501-amino-acid chain; its full sequence is Glutamyl-tRNA(Gln) amidotransferase subunit A (501 aa).

Active-site charge relay system residues include lysine 84 and serine 159. The active-site Acyl-ester intermediate is the serine 183.

This sequence belongs to the amidase family. GatA subfamily. Heterotrimer of A, B and C subunits.

The enzyme catalyses L-glutamyl-tRNA(Gln) + L-glutamine + ATP + H2O = L-glutaminyl-tRNA(Gln) + L-glutamate + ADP + phosphate + H(+). Allows the formation of correctly charged Gln-tRNA(Gln) through the transamidation of misacylated Glu-tRNA(Gln) in organisms which lack glutaminyl-tRNA synthetase. The reaction takes place in the presence of glutamine and ATP through an activated gamma-phospho-Glu-tRNA(Gln). The protein is Glutamyl-tRNA(Gln) amidotransferase subunit A of Streptomyces avermitilis (strain ATCC 31267 / DSM 46492 / JCM 5070 / NBRC 14893 / NCIMB 12804 / NRRL 8165 / MA-4680).